Reading from the N-terminus, the 291-residue chain is Trimeric intracellular cation channel type B (291 aa).

The Lumenal portion of the chain corresponds to 1 to 16 (MEYPWDDLTLAFSRTS). The helical transmembrane segment at 17-33 (MFPFFDIAHYLVSVMAL) threads the bilayer. The Cytoplasmic segment spans residues 34–47 (KQRPGAVAAAWSNP). Residues 48-69 (LSSWLSAMLHCFGGGILSCILL) form a helical membrane-spanning segment. Residues 70–80 (AEPPLKFLTNH) lie on the Lumenal side of the membrane. Residues 81–99 (TNILLASSIWYIVFFCPRD) form a helical membrane-spanning segment. Residues 100–103 (LVSQ) are Cytoplasmic-facing. A helical transmembrane segment spans residues 104–122 (GYSYQPIQLLAAGMKEVTR). The a 1,2-diacyl-sn-glycero-3-phospho-(1D-myo-inositol-4,5-bisphosphate) site is built by lysine 118 and arginine 122. Topologically, residues 123–138 (TWKIVGGVAHANGYYR) are lumenal. Residues 139–156 (NGWIVMIAVGWARGAGGA) form a helical membrane-spanning segment. Residues 157–179 (IITACEQLLKGDWKPEGDEWLKM) are Cytoplasmic-facing. Residues 180 to 197 (SFPCKVTLLGSIMFTFQH) traverse the membrane as a helical segment. Residues 198–206 (TRHLAISKH) are Lumenal-facing. A helical membrane pass occupies residues 207 to 225 (DLMFLYTIFLVTIKVTMMM). At 226–291 (TKDAAVTLTP…SAKRHAKKED (66 aa)) the chain is on the cytoplasmic side. The disordered stretch occupies residues 254–291 (LSEKKAEVKPSSNGSASSASKRGTEPPSSAKRHAKKED). A compositionally biased stretch (low complexity) spans 264–273 (SSNGSASSAS).

It belongs to the TMEM38 family. Homotrimer; conformation seems to be controled by binding to diacylglycerol (DAG).

It localises to the endoplasmic reticulum membrane. It catalyses the reaction K(+)(in) = K(+)(out). Channel activity is activated by increased cytosolic Ca(2+) levels and blocked by luminal high Ca(2+) levels. Its function is as follows. Intracellular monovalent cation channel required for maintenance of rapid intracellular calcium release. Acts as a potassium counter-ion channel that functions in synchronization with calcium release from intracellular stores. Activated by increased cytosolic Ca(2+) levels. This chain is Trimeric intracellular cation channel type B (Tmem38b), found in Rattus norvegicus (Rat).